Consider the following 218-residue polypeptide: Ribonuclease HII (218 aa).

Residues 24–218 (ESIAGVDEVG…KLFAVNGSLT (195 aa)) enclose the RNase H type-2 domain. Residues Asp-30, Glu-31, and Asp-126 each coordinate a divalent metal cation.

It belongs to the RNase HII family. Mn(2+) is required as a cofactor. Mg(2+) serves as cofactor.

The protein localises to the cytoplasm. It catalyses the reaction Endonucleolytic cleavage to 5'-phosphomonoester.. Functionally, endonuclease that specifically degrades the RNA of RNA-DNA hybrids. The polypeptide is Ribonuclease HII (Prochlorococcus marinus (strain MIT 9313)).